A 374-amino-acid polypeptide reads, in one-letter code: MIPVFLAAIAVFLPLTSGHIAFWHNSMYGFNVTEQTFPYDNRPVVPLQNMTFKEWWFHNHLDYPPHPGDFFELPAGKPAMAELACNKGATTWFNSSEGGNIQNGDDPCPGSPPSEYHTTGFDDLKGCALAIAYEPDVTKIKPEDFTIFSVNQTCVWYRFTDFQVPERMPSCPPGGCHCAWFWIHSPDSGGEQIYMNGFKCKITGSTSNVPLAKPKVARRCGADPDHGKPDAVPGNCTYGAKQPLYWLQQEGNNEFDDYIAPPFYNDLYNFKDGAQNDIFIDSYPHGIPDPSPEQTIIPTPLDAAVISNATPAPSNGSCSSRPPSSPVSSSAASTTTSRSPRPSARGFRRSTGEKAHTGLPRKSWTQSRKMRYVF.

The first 18 residues, 1–18, serve as a signal peptide directing secretion; that stretch reads MIPVFLAAIAVFLPLTSG. N-linked (GlcNAc...) asparagine glycosylation is found at N31, N49, N94, and N151. Intrachain disulfides connect C85-C108, C127-C154, C171-C176, C178-C200, and C220-C236. N235 and N315 each carry an N-linked (GlcNAc...) asparagine glycan. The interval 306-374 is disordered; sequence ISNATPAPSN…TQSRKMRYVF (69 aa). Over residues 313–344 the composition is skewed to low complexity; it reads PSNGSCSSRPPSSPVSSSAASTTTSRSPRPSA.

It belongs to the polysaccharide monooxygenase AA14 family. It depends on Cu(2+) as a cofactor.

The protein resides in the secreted. Its function is as follows. Lytic polysaccharide monooxygenase (LPMO) that oxidatively cleaves xylan with both C1 and C4 regioselectivity and that specifically targets the protective shield made by heteroxylans that cover cellulose microfibrils in wood. Catalysis by LPMOs requires the reduction of the active-site copper from Cu(II) to Cu(I) by a reducing agent and H(2)O(2) or O(2) as a cosubstrate. Cleavage occurs only when xylans are bound to cellulose and not when they are in solution. Increases the efficiency of wood saccharification through oxidative cleavage of highly refractory xylan-coated cellulose fibers via synergistic relationship with xylan-active enzymes, xylobiohydrolases and cellobiohydrolases. The protein is AA14 family lytic polysaccharide monooxygenase B of Pycnoporus cinnabarinus (Cinnabar-red polypore).